The chain runs to 304 residues: Homoserine kinase (304 aa).

P91–A101 is an ATP binding site.

This sequence belongs to the GHMP kinase family. Homoserine kinase subfamily.

It is found in the cytoplasm. It catalyses the reaction L-homoserine + ATP = O-phospho-L-homoserine + ADP + H(+). It functions in the pathway amino-acid biosynthesis; L-threonine biosynthesis; L-threonine from L-aspartate: step 4/5. Functionally, catalyzes the ATP-dependent phosphorylation of L-homoserine to L-homoserine phosphate. The protein is Homoserine kinase of Solibacter usitatus (strain Ellin6076).